The sequence spans 370 residues: Chloromuconate cycloisomerase (370 aa).

The active-site Proton acceptor is the Lys165. Mn(2+) contacts are provided by Asp194, Glu220, and Asp245. Glu323 serves as the catalytic Proton donor.

The protein belongs to the mandelate racemase/muconate lactonizing enzyme family. The cofactor is Mn(2+).

The enzyme catalyses 2-[(2R)-2-chloro-2,5-dihydro-5-oxofuryl]acetate = 3-chloro-cis,cis-muconate + H(+). It functions in the pathway aromatic compound metabolism; 3-chlorocatechol degradation. The protein is Chloromuconate cycloisomerase (tcbD) of Pseudomonas sp. (strain P51).